The following is a 90-amino-acid chain: MVKNLFISVIPQEEKEKNKGSVEFQVFNFTNKIRRLTAHLEFHRKDYLSQRGLRKILGKRQRLLAYLSKKNRVRYKELIGQLDIREPKTR.

The protein belongs to the universal ribosomal protein uS15 family. Part of the 30S ribosomal subunit.

Its subcellular location is the plastid. The protein resides in the chloroplast. The chain is Small ribosomal subunit protein uS15c (rps15) from Drimys granadensis.